The primary structure comprises 90 residues: DNA-binding protein HU-alpha (90 aa).

It belongs to the bacterial histone-like protein family. As to quaternary structure, heterodimer of an alpha and a beta chain.

In terms of biological role, histone-like DNA-binding protein which is capable of wrapping DNA to stabilize it, and thus to prevent its denaturation under extreme environmental conditions. This Pseudomonas aeruginosa (strain ATCC 15692 / DSM 22644 / CIP 104116 / JCM 14847 / LMG 12228 / 1C / PRS 101 / PAO1) protein is DNA-binding protein HU-alpha (hupA).